The primary structure comprises 445 residues: Tubulin beta chain (445 aa).

The short motif at 1-4 (MREI) is the MREI motif element. 8 residues coordinate GTP: Gln-11, Glu-69, Ser-138, Gly-142, Thr-143, Gly-144, Asn-204, and Asn-226. Glu-69 provides a ligand contact to Mg(2+). Positions 421 to 445 (EYQQYQDATAEEEGEGEEEGDEEVA) are disordered. Residues 429–445 (TAEEEGEGEEEGDEEVA) are compositionally biased toward acidic residues. Glu-438 carries the post-translational modification 5-glutamyl polyglutamate.

Belongs to the tubulin family. Dimer of alpha and beta chains. A typical microtubule is a hollow water-filled tube with an outer diameter of 25 nm and an inner diameter of 15 nM. Alpha-beta heterodimers associate head-to-tail to form protofilaments running lengthwise along the microtubule wall with the beta-tubulin subunit facing the microtubule plus end conferring a structural polarity. Microtubules usually have 13 protofilaments but different protofilament numbers can be found in some organisms and specialized cells. Mg(2+) is required as a cofactor. Some glutamate residues at the C-terminus are polyglycylated, resulting in polyglycine chains on the gamma-carboxyl group. Glycylation is mainly limited to tubulin incorporated into axonemes (cilia and flagella) whereas glutamylation is prevalent in neuronal cells, centrioles, axonemes, and the mitotic spindle. Both modifications can coexist on the same protein on adjacent residues, and lowering polyglycylation levels increases polyglutamylation, and reciprocally. The precise function of polyglycylation is still unclear. In terms of processing, some glutamate residues at the C-terminus are polyglutamylated, resulting in polyglutamate chains on the gamma-carboxyl group. Polyglutamylation plays a key role in microtubule severing by spastin (SPAST). SPAST preferentially recognizes and acts on microtubules decorated with short polyglutamate tails: severing activity by SPAST increases as the number of glutamates per tubulin rises from one to eight, but decreases beyond this glutamylation threshold. Brain.

It is found in the cytoplasm. The protein localises to the cytoskeleton. Functionally, tubulin is the major constituent of microtubules, a cylinder consisting of laterally associated linear protofilaments composed of alpha- and beta-tubulin heterodimers. Microtubules grow by the addition of GTP-tubulin dimers to the microtubule end, where a stabilizing cap forms. Below the cap, tubulin dimers are in GDP-bound state, owing to GTPase activity of alpha-tubulin. The polypeptide is Tubulin beta chain (Pseudopleuronectes americanus (Winter flounder)).